The chain runs to 503 residues: MDLIPNFAMETWVLVATSLVLLYIYGTHSHKLFKKLGIPGPTPLPFLGTILFYLRGLWNFDRECNEKYGEMWGLYEGQQPMLVIMDPDMIKTVLVKECYSVFTNQMPLGPMGFLKSALSFAEDEEWKRIRTLLSPAFTSVKFKEMVPIISQCGDMLVRSLRQEAENSKSINLKDFFGAYTMDVITGTLFGVNLDSLNNPQDPFLKNMKKLLKLDFLDPFLLLISLFPFLTPVFEALNIGLFPKDVTHFLKNSIERMKESRLKDKQKHRVDFFQQMIDSQNSKETKSHKALSDLELVAQSIIIIFAAYDTTSTTLPFIMYELATHPDVQQKLQEEIDAVLPNKAPVTYDALVQMEYLDMVVNETLRLFPVVSRVTRVCKKDIEINGVFIPKGLAVMVPIYALHHDPKYWTEPEKFCPERFSKKNKDSIDLYRYIPFGAGPRNCIGMRFALTNIKLAVIRALQNFSFKPCKETQIPLKLDNLPILQPEKPIVLKVHLRDGITSGP.

Residue C442 coordinates heme.

It belongs to the cytochrome P450 family. The cofactor is heme. As to expression, highest expression level in prostate. Also expressed in liver, kidney, pancreas, fetal liver and fetal skeletal muscle.

It is found in the endoplasmic reticulum membrane. The protein resides in the microsome membrane. It catalyses the reaction an organic molecule + reduced [NADPH--hemoprotein reductase] + O2 = an alcohol + oxidized [NADPH--hemoprotein reductase] + H2O + H(+). Its function is as follows. Exhibits low testosterone 6-beta-hydroxylase activity. This is Cytochrome P450 3A43 (CYP3A43) from Homo sapiens (Human).